Here is a 1680-residue protein sequence, read N- to C-terminus: Alpha-protein kinase 3 (1680 aa).

Residues 1-37 form a disordered region; the sequence is MGSRRAAGRGWGLGGRAGAGGDSEDDGPVWTPGPASR. The span at 9–21 shows a compositional bias: gly residues; that stretch reads RGWGLGGRAGAGG. The region spanning 77–173 is the Ig-like 1 domain; it reads PLFETTLKSR…SGVLEVGTMT (97 aa). At serine 229 the chain carries Phosphoserine. Disordered regions lie at residues 237 to 288, 302 to 759, 785 to 950, 1078 to 1128, and 1147 to 1244; these read STPV…NGED, ELGP…CPRE, SEEA…GTRS, EGSA…LTGL, and PKVR…QRKA. Over residues 320-337 the composition is skewed to basic and acidic residues; sequence KDEESKPGEQKLELEKAE. Residues 339 to 353 are compositionally biased toward polar residues; that stretch reads SQCSSENVVPSTDKP. Positions 402–426 are enriched in pro residues; it reads APAPAPVPAPALAPAPVPVPAPTPV. The segment covering 514–532 has biased composition (low complexity); the sequence is ESTTTSLSSQTSESMAQSL. Polar residues-rich tracts occupy residues 557–566 and 731–744; these read SPLQGQTSHK and ETQS…SLSS. Basic and acidic residues predominate over residues 785 to 796; sequence SEEAAFRSHEDG. Residues 917-932 are compositionally biased toward polar residues; that stretch reads SPTQSHPPEAMATSSE. Basic and acidic residues-rich tracts occupy residues 1087–1111 and 1151–1165; these read ERTS…ESRT and AGSD…ERES. Position 1199 is a phosphoserine (serine 1199). The span at 1231-1244 shows a compositional bias: basic and acidic residues; sequence DEGKQEALAKQRKA. Residues 1251–1339 form the Ig-like 2 domain; that stretch reads PQVIRKIRVE…GSASTDFCLS (89 aa). Cysteine 1273 and cysteine 1323 are disulfide-bonded. The region spanning 1367–1600 is the Alpha-type protein kinase domain; sequence KGLADSGCWG…YCDMLGLKPL (234 aa). Residues 1603-1680 form a disordered region; sequence PEAAHPQAKA…DGSSKAQSMR (78 aa). 2 stretches are compositionally biased toward polar residues: residues 1639 to 1660 and 1671 to 1680; these read PQGS…QAAT and DGSSKAQSMR.

It belongs to the protein kinase superfamily. Alpha-type protein kinase family. ALPK subfamily. As to expression, expressed in the heart and skeletal muscle of adult mice.

The protein localises to the nucleus. The enzyme catalyses L-seryl-[protein] + ATP = O-phospho-L-seryl-[protein] + ADP + H(+). The catalysed reaction is L-threonyl-[protein] + ATP = O-phospho-L-threonyl-[protein] + ADP + H(+). Involved in cardiomyocyte differentiation. The chain is Alpha-protein kinase 3 from Mus musculus (Mouse).